Reading from the N-terminus, the 470-residue chain is Myricetin 3-O-rhamnoside 1,2-glucosyltransferase UGT709G2 (470 aa).

The active-site Proton acceptor is the His20. His20 contacts an anthocyanidin. The Charge relay role is filled by Asp117. UDP-alpha-D-glucose-binding residues include Ala340, Gln342, His357, Trp360, Asn361, Ser362, and Glu365. Residue Ala380 coordinates an anthocyanidin. 2 residues coordinate UDP-alpha-D-glucose: Asp381 and Gln382.

Belongs to the UDP-glycosyltransferase family. In terms of tissue distribution, expressed in young cromes.

The catalysed reaction is myricetin 3-O-alpha-L-rhamnoside + UDP-alpha-D-glucose = myricetin 3-O-[beta-D-glucosyl-(1-&gt;2)-alpha-L-rhamnoside] + UDP + H(+). It functions in the pathway flavonoid metabolism. Its function is as follows. Glucosyltransferase involved in montbretin A (MbA) biosynthesis. Catalyzes the glucosylation of myricetin 3-O-alpha-L-rhamnoside (MR) to produce myricetin 3-O-[beta-D-glucosyl-(1-&gt;2)-alpha-L-rhamnoside] (MRG), a precursor of MbA. MbA is a potent inhibitor of human pancreatic alpha-amylase and is being developed as drug candidate to treat type-2 diabetes. In vitro, is able to transfer UDP-xylose with 50-fold less efficiency compared with UDP-glucose. In vitro, can use myricetin 3-O-glucoside and quercetin 3-O-glucoside as substrates, although these two flavonoids may not be physiological substrates in vivo. The sequence is that of Myricetin 3-O-rhamnoside 1,2-glucosyltransferase UGT709G2 from Crocosmia x crocosmiiflora (Montbretia).